The primary structure comprises 476 residues: Angiotensinogen (476 aa).

The first 24 residues, 1 to 24 (MAPAGLSLGAAILCLLAWAGLAAG), serve as a signal peptide directing secretion. Cys-42 and Cys-161 are oxidised to a cystine. N-linked (GlcNAc...) asparagine glycans are attached at residues Asn-295, Asn-319, Asn-362, and Asn-401.

The protein belongs to the serpin family. In terms of processing, in response to low blood pressure, the enzyme renin/REN cleaves angiotensinogen to produce angiotensin-1. Angiotensin-1 is a substrate of ACE (angiotensin converting enzyme) that removes a dipeptide to yield the physiologically active peptide angiotensin-2. Angiotensin-1 and angiotensin-2 can be further processed to generate angiotensin-3, angiotensin-4. Angiotensin 1-9 is cleaved from angiotensin-1 by ACE2 and can be further processed by ACE to produce angiotensin 1-7, angiotensin 1-5 and angiotensin 1-4. Angiotensin 1-7 has also been proposed to be cleaved from angiotensin-2 by ACE2 or from angiotensin-1 by MME (neprilysin). Post-translationally, the disulfide bond is labile. Angiotensinogen is present in the circulation in a near 40:60 ratio with the oxidized disulfide-bonded form, which preferentially interacts with receptor-bound renin.

The protein localises to the secreted. Its function is as follows. Essential component of the renin-angiotensin system (RAS), a potent regulator of blood pressure, body fluid and electrolyte homeostasis. In terms of biological role, acts directly on vascular smooth muscle as a potent vasoconstrictor, affects cardiac contractility and heart rate through its action on the sympathetic nervous system, and alters renal sodium and water absorption through its ability to stimulate the zona glomerulosa cells of the adrenal cortex to synthesize and secrete aldosterone. Acts by binding to angiotensin receptors AGTR1 and AGTR2. Also binds the DEAR/FBXW7-AS1 receptor. Functionally, stimulates aldosterone release. Is a ligand for the G-protein coupled receptor MAS1. Has vasodilator and antidiuretic effects. Has an antithrombotic effect that involves MAS1-mediated release of nitric oxide from platelets. The protein is Angiotensinogen (AGT) of Bos taurus (Bovine).